The chain runs to 299 residues: Diaminopimelate epimerase (299 aa).

The substrate site is built by N15, Q47, and N67. Residue C76 is the Proton donor of the active site. Residues G77–N78, N163, N197, and E215–R216 each bind substrate. Residue C224 is the Proton acceptor of the active site. G225–S226 is a binding site for substrate.

This sequence belongs to the diaminopimelate epimerase family. As to quaternary structure, homodimer.

It is found in the cytoplasm. It catalyses the reaction (2S,6S)-2,6-diaminopimelate = meso-2,6-diaminopimelate. It participates in amino-acid biosynthesis; L-lysine biosynthesis via DAP pathway; DL-2,6-diaminopimelate from LL-2,6-diaminopimelate: step 1/1. In terms of biological role, catalyzes the stereoinversion of LL-2,6-diaminopimelate (L,L-DAP) to meso-diaminopimelate (meso-DAP), a precursor of L-lysine and an essential component of the bacterial peptidoglycan. This is Diaminopimelate epimerase from Agrobacterium fabrum (strain C58 / ATCC 33970) (Agrobacterium tumefaciens (strain C58)).